A 467-amino-acid chain; its full sequence is Glycosyl hydrolase family 109 protein (467 aa).

Residues 1–31 constitute a signal peptide (tat-type signal); sequence MKNFNRRAFLKAAGATTAGLVTSGLILPASA. Residues 66–67, Asp-88, 137–140, 157–158, and Asn-186 each bind NAD(+); these read QR, WQWH, and EV. Residues Tyr-215, Arg-234, 246 to 249, and Tyr-328 each bind substrate; that span reads YPTH. An NAD(+)-binding site is contributed by Tyr-246.

This sequence belongs to the Gfo/Idh/MocA family. Glycosyl hydrolase 109 subfamily. The cofactor is NAD(+). Predicted to be exported by the Tat system. The position of the signal peptide cleavage has not been experimentally proven.

In terms of biological role, glycosidase. This Shewanella woodyi (strain ATCC 51908 / MS32) protein is Glycosyl hydrolase family 109 protein.